Consider the following 165-residue polypeptide: PTS system glucose-specific EIIA component (165 aa).

A PTS EIIA type-1 domain is found at 33-137 (DPVFAGRMMG…STITPIVITN (105 aa)). Residues histidine 70 and histidine 85 each coordinate Zn(2+). Residue histidine 85 is the Tele-phosphohistidine intermediate; for EIIA activity of the active site. Histidine 85 carries the phosphohistidine; by HPr modification.

Heterodimer with glycerol kinase (glpk). Zn(2+) serves as cofactor.

The protein resides in the cytoplasm. Its function is as follows. The phosphoenolpyruvate-dependent sugar phosphotransferase system (sugar PTS), a major carbohydrate active transport system, catalyzes the phosphorylation of incoming sugar substrates concomitantly with their translocation across the cell membrane. The enzyme II complex composed of PtsG and Crr is involved in glucose transport. The polypeptide is PTS system glucose-specific EIIA component (crr) (Bacillus anthracis).